The following is an 806-amino-acid chain: Transitional endoplasmic reticulum ATPase (806 aa).

Position 3 is a phosphoserine (serine 3). ATP-binding positions include proline 247–leucine 253, asparagine 348, histidine 384, and glycine 521–leucine 526. Disordered stretches follow at residues arginine 708–proline 727 and phenylalanine 768–glycine 806. The span at phenylalanine 768–glutamine 778 shows a compositional bias: low complexity. Over residues glycine 779–asparagine 794 the composition is skewed to gly residues.

This sequence belongs to the AAA ATPase family. As to quaternary structure, homohexamer.

Its subcellular location is the cytoplasm. It is found in the cytosol. The protein localises to the endoplasmic reticulum. The protein resides in the nucleus. The enzyme catalyses ATP + H2O = ADP + phosphate + H(+). In terms of biological role, necessary for the fragmentation of Golgi stacks during mitosis and for their reassembly after mitosis. Involved in the formation of the nuclear envelope, and of the transitional endoplasmic reticulum (tER). The transfer of membranes from the endoplasmic reticulum to the Golgi apparatus occurs via 50-70 nm transition vesicles which derive from part-rough, part-smooth transitional elements of the endoplasmic reticulum (tER). Vesicle budding from the tER is an ATP-dependent process. Also involved in DNA damage response: recruited to double-strand breaks (DSBs) sites and promotes the recruitment of tp53bp1 at DNA damage sites. Together with sprtn metalloprotease, involved in the repair of covalent DNA-protein cross-links (DPCs) during DNA synthesis. Involved in interstrand cross-link repair in response to replication stress by mediating unloading of the ubiquitinated CMG helicase complex. Enhances cell cycle progression and inhibits apoptosis at low temperatures. Essential for the maturation of ubiquitin-containing autophagosomes and the clearance of ubiquitinated protein by autophagy. Acts as a negative regulator of type I interferon production by promoting ubiquitination of RIGI. May play a role in the ubiquitin-dependent sorting of membrane proteins to lysosomes where they undergo degradation. May more particularly play a role in caveolins sorting in cells. By controlling the steady-state expression of the IGF1R receptor, indirectly regulates the insulin-like growth factor receptor signaling pathway. The chain is Transitional endoplasmic reticulum ATPase from Danio rerio (Zebrafish).